A 719-amino-acid chain; its full sequence is Protein Hook homolog 2 (719 aa).

The tract at residues 1 to 161 (MSVDKAELCG…ELMTKDTPDS (161 aa)) is required for localization to the centrosome and induction of aggresome formation. Positions 1 to 548 (MSVDKAELCG…LKRKLEEHLQ (548 aa)) are sufficient for interaction with microtubules. Residues 6–122 (AELCGSLLTW…KLLQLVLGCA (117 aa)) enclose the Calponin-homology (CH) domain. Position 163 is a phosphoserine (S163). Coiled-coil stretches lie at residues 180–427 (LSEE…AQLQ) and 455–607 (AELR…VDKA). T230 bears the Phosphothreonine mark. A required for localization to the centrosome and induction of aggresome formation region spans residues 533-719 (DAISILLKRK…SLNLRPTDKH (187 aa)). Residues 584–719 (HNLQKKDADL…SLNLRPTDKH (136 aa)) form a sufficient for interaction with CNTRL region. Positions 696–719 (LATNSRRGPLGRLASLNLRPTDKH) are disordered. A Phosphoserine modification is found at S710.

It belongs to the hook family. Self-associates. Component of the FTS/Hook/FHIP complex (FHF complex), composed of AKTIP/FTS, FHIP1B, and one or more members of the Hook family of proteins HOOK1, HOOK2, and HOOK3. May interact directly with AKTIP/FTS, HOOK1 and HOOK3. Associates with several subunits of the homotypic vesicular sorting complex (the HOPS complex) including VPS16 and VPS41; these interactions may be indirect. Interacts with CNTRL. Interacts with microtubules. Interacts with ZC3H14. Interacts with LRGUK (via guanylate kinase-like domain). Interacts with CCDC181. Interacts with AP4M1; the interaction is direct, mediates the interaction between FTS-Hook-FHIP (FHF) complex and AP-4 and the perinuclear distribution of AP-4.

The protein localises to the cytoplasm. It is found in the cytoskeleton. The protein resides in the microtubule organizing center. It localises to the centrosome. Its subcellular location is the golgi apparatus. The protein localises to the trans-Golgi network. Its function is as follows. Component of the FTS/Hook/FHIP complex (FHF complex). The FHF complex may function to promote vesicle trafficking and/or fusion via the homotypic vesicular protein sorting complex (the HOPS complex). Contributes to the establishment and maintenance of centrosome function. May function in the positioning or formation of aggresomes, which are pericentriolar accumulations of misfolded proteins, proteasomes and chaperones. FHF complex promotes the distribution of AP-4 complex to the perinuclear area of the cell. This Homo sapiens (Human) protein is Protein Hook homolog 2 (HOOK2).